The following is a 417-amino-acid chain: Tyrosine--tRNA ligase (417 aa).

Tyr39 is an L-tyrosine binding site. Residues 44–53 carry the 'HIGH' region motif; that stretch reads ATATSLHIGN. Tyr176 and Gln180 together coordinate L-tyrosine. The short motif at 236–240 is the 'KMSKS' region element; it reads KMGKS. Position 239 (Lys239) interacts with ATP. An S4 RNA-binding domain is found at 350–416; sequence IGILSLLVTA…GKKKHVLVRP (67 aa).

It belongs to the class-I aminoacyl-tRNA synthetase family. TyrS type 1 subfamily. In terms of assembly, homodimer.

The protein resides in the cytoplasm. It carries out the reaction tRNA(Tyr) + L-tyrosine + ATP = L-tyrosyl-tRNA(Tyr) + AMP + diphosphate + H(+). In terms of biological role, catalyzes the attachment of tyrosine to tRNA(Tyr) in a two-step reaction: tyrosine is first activated by ATP to form Tyr-AMP and then transferred to the acceptor end of tRNA(Tyr). The protein is Tyrosine--tRNA ligase of Mesorhizobium japonicum (strain LMG 29417 / CECT 9101 / MAFF 303099) (Mesorhizobium loti (strain MAFF 303099)).